Consider the following 383-residue polypeptide: 8-amino-7-oxononanoate synthase (383 aa).

A substrate-binding site is contributed by Arg21. A pyridoxal 5'-phosphate-binding site is contributed by 108 to 109; that stretch reads GY. His133 contacts substrate. 3 residues coordinate pyridoxal 5'-phosphate: Ser179, His207, and Thr233. Lys236 carries the post-translational modification N6-(pyridoxal phosphate)lysine. Residue Thr350 participates in substrate binding.

Belongs to the class-II pyridoxal-phosphate-dependent aminotransferase family. BioF subfamily. Homodimer. It depends on pyridoxal 5'-phosphate as a cofactor.

It catalyses the reaction 6-carboxyhexanoyl-[ACP] + L-alanine + H(+) = (8S)-8-amino-7-oxononanoate + holo-[ACP] + CO2. It participates in cofactor biosynthesis; biotin biosynthesis. Its function is as follows. Catalyzes the decarboxylative condensation of pimeloyl-[acyl-carrier protein] and L-alanine to produce 8-amino-7-oxononanoate (AON), [acyl-carrier protein], and carbon dioxide. This is 8-amino-7-oxononanoate synthase from Photorhabdus laumondii subsp. laumondii (strain DSM 15139 / CIP 105565 / TT01) (Photorhabdus luminescens subsp. laumondii).